The following is a 355-amino-acid chain: Lamassu protein LmuA (355 aa).

Component of antiviral defense system Lamassu type II, composed of LmuA and LmuB. Expression of Lamassu type II in B.subtilis (strain BEST7003) confers resistance to phage SpBeta. May be a nuclease. The polypeptide is Lamassu protein LmuA (Bacillus cereus (strain VD014)).